Reading from the N-terminus, the 217-residue chain is Protein-L-isoaspartate O-methyltransferase (217 aa).

Residue serine 65 is part of the active site.

It belongs to the methyltransferase superfamily. L-isoaspartyl/D-aspartyl protein methyltransferase family.

It is found in the cytoplasm. It carries out the reaction [protein]-L-isoaspartate + S-adenosyl-L-methionine = [protein]-L-isoaspartate alpha-methyl ester + S-adenosyl-L-homocysteine. Functionally, catalyzes the methyl esterification of L-isoaspartyl residues in peptides and proteins that result from spontaneous decomposition of normal L-aspartyl and L-asparaginyl residues. It plays a role in the repair and/or degradation of damaged proteins. The polypeptide is Protein-L-isoaspartate O-methyltransferase (Chlorobium limicola (strain DSM 245 / NBRC 103803 / 6330)).